Consider the following 266-residue polypeptide: MPDWLIALILGLIEGLTEFIPVSSTGHLLLLGHFLGFHSPGNTFQVLIQLGAILAITGVYFGRLWGLLTTLPTEPGSRRFVIGILLAFLPAVFVGVAAHDFIKTVLYETPALVCSTLIIGGFILLALDRMKLEPRYTDVAEYPLKTAFIIGLFQCLALVPGVSRSGATIAGALLLKCDKRSAAEFSFFLAMPTMAGAFAYDLYKNIDKLSTNDLGLIGIGFLAALVSGVFVVKTVLDFITRHGFAPFAYWRIAVGVVGLALLYIPR.

8 helical membrane passes run 4–24, 46–66, 82–102, 105–125, 142–162, 182–202, 216–236, and 244–264; these read WLIA…PVSS, VLIQ…RLWG, IGIL…HDFI, VLYE…FILL, YPLK…VPGV, AAEF…AYDL, LIGI…KTVL, and FAPF…LLYI.

The protein belongs to the UppP family.

It localises to the cell inner membrane. The enzyme catalyses di-trans,octa-cis-undecaprenyl diphosphate + H2O = di-trans,octa-cis-undecaprenyl phosphate + phosphate + H(+). Functionally, catalyzes the dephosphorylation of undecaprenyl diphosphate (UPP). Confers resistance to bacitracin. In Caulobacter vibrioides (strain ATCC 19089 / CIP 103742 / CB 15) (Caulobacter crescentus), this protein is Undecaprenyl-diphosphatase.